The sequence spans 255 residues: MSMPFYVSPEQLMKDRADFARKGIARGRSVAAVQYADGILFVSENPSQALHKVSEIYDRIAFAAVGRYNEFENLRIAGVRLADMRGYAYDRRDVTGRGLANAYAQTLGTIFSSGGEKPYEVELFVAEIGDEAAGDQLYRLTYDGQVADEHGFAVMGGAADTVASYLKERYAEGASLTDAVRLAVASLGHTDTEDRVIPADDLEVAVLDRTRSQPRKFARLRPARLEELLGERGPAQHAPEEPADPEPEPPIAPPG.

The interval 224-255 (RLEELLGERGPAQHAPEEPADPEPEPPIAPPG) is disordered.

The protein belongs to the peptidase T1A family. In terms of assembly, the 20S proteasome core is composed of 14 alpha and 14 beta subunits that assemble into four stacked heptameric rings, resulting in a barrel-shaped structure. The two inner rings, each composed of seven catalytic beta subunits, are sandwiched by two outer rings, each composed of seven alpha subunits. The catalytic chamber with the active sites is on the inside of the barrel. Has a gated structure, the ends of the cylinder being occluded by the N-termini of the alpha-subunits. Is capped by the proteasome-associated ATPase, ARC.

It localises to the cytoplasm. Its pathway is protein degradation; proteasomal Pup-dependent pathway. Its activity is regulated as follows. The formation of the proteasomal ATPase ARC-20S proteasome complex, likely via the docking of the C-termini of ARC into the intersubunit pockets in the alpha-rings, may trigger opening of the gate for substrate entry. Interconversion between the open-gate and close-gate conformations leads to a dynamic regulation of the 20S proteasome proteolysis activity. Functionally, component of the proteasome core, a large protease complex with broad specificity involved in protein degradation. This chain is Proteasome subunit alpha, found in Nocardioides sp. (strain ATCC BAA-499 / JS614).